A 1222-amino-acid polypeptide reads, in one-letter code: ATP-dependent helicase/nuclease subunit A (1222 aa).

One can recognise a UvrD-like helicase ATP-binding domain in the interval 27 to 483 (HLQENERCRD…RDYQKKPEQG (457 aa)). Residue 48-55 (AIYTSGQN) participates in ATP binding. The UvrD-like helicase C-terminal domain occupies 512 to 798 (ESVGDVLYDE…ADVEVATPKQ (287 aa)).

It belongs to the helicase family. AddA subfamily. Heterodimer of AddA and AddB/RexB. The cofactor is Mg(2+).

The catalysed reaction is Couples ATP hydrolysis with the unwinding of duplex DNA by translocating in the 3'-5' direction.. It carries out the reaction ATP + H2O = ADP + phosphate + H(+). Functionally, the heterodimer acts as both an ATP-dependent DNA helicase and an ATP-dependent, dual-direction single-stranded exonuclease. Recognizes the chi site generating a DNA molecule suitable for the initiation of homologous recombination. The AddA nuclease domain is required for chi fragment generation; this subunit has the helicase and 3' -&gt; 5' nuclease activities. This is ATP-dependent helicase/nuclease subunit A from Streptococcus pyogenes serotype M1.